Consider the following 149-residue polypeptide: MADQLTDEQIAEFKEAFSLFDKDGDGCITTKELGTVMRSLGQNPTEAELQDMINEVDADGNGTIDFPEFLNLMARKMKDTDSEEELKEAFRVFDKDQDGFISAAELRHVMTNLGEKLTDEEVDEMIREADVDGDGQINYEEFVKVMMAK.

Ala-2 is subject to N-acetylalanine. 4 consecutive EF-hand domains span residues 8-43, 44-79, 81-116, and 117-149; these read EQIAEFKEAFSLFDKDGDGCITTKELGTVMRSLGQN, PTEAELQDMINEVDADGNGTIDFPEFLNLMARKMKD, DSEEELKEAFRVFDKDQDGFISAAELRHVMTNLGEK, and LTDEEVDEMIREADVDGDGQINYEEFVKVMMAK. Residues Asp-21, Asp-23, Asp-25, Cys-27, Glu-32, Asp-57, Asp-59, Asn-61, Thr-63, Glu-68, Asp-94, Asp-96, Asp-98, and Glu-105 each coordinate Ca(2+). Lys-116 carries the post-translational modification N6,N6,N6-trimethyllysine. Residues Asp-130, Asp-132, Asp-134, Gln-136, and Glu-141 each contribute to the Ca(2+) site.

This sequence belongs to the calmodulin family.

Its function is as follows. Calmodulin mediates the control of a large number of enzymes, ion channels and other proteins by Ca(2+). Among the enzymes to be stimulated by the calmodulin-Ca(2+) complex are a number of protein kinases and phosphatases. This is Calmodulin from Triticum aestivum (Wheat).